Reading from the N-terminus, the 477-residue chain is Glycogen synthase (477 aa).

Residue K15 coordinates ADP-alpha-D-glucose.

The protein belongs to the glycosyltransferase 1 family. Bacterial/plant glycogen synthase subfamily.

The catalysed reaction is [(1-&gt;4)-alpha-D-glucosyl](n) + ADP-alpha-D-glucose = [(1-&gt;4)-alpha-D-glucosyl](n+1) + ADP + H(+). The protein operates within glycan biosynthesis; glycogen biosynthesis. Its function is as follows. Synthesizes alpha-1,4-glucan chains using ADP-glucose. This Anaeromyxobacter dehalogenans (strain 2CP-1 / ATCC BAA-258) protein is Glycogen synthase.